The chain runs to 700 residues: uncharacterized protein (700 aa).

Residues cysteine 307, cysteine 310, cysteine 314, and cysteine 558 each coordinate [4Fe-4S] cluster.

It belongs to the AOR/FOR family. [4Fe-4S] cluster serves as cofactor. Mo-molybdopterin is required as a cofactor. It depends on tungstopterin as a cofactor.

This is an uncharacterized protein from Escherichia coli (strain K12).